The primary structure comprises 193 residues: Hydroxyacylglutathione hydrolase-like protein (193 aa).

Zn(2+) contacts are provided by histidine 54, histidine 56, aspartate 58, histidine 59, and histidine 110.

Belongs to the metallo-beta-lactamase superfamily. Glyoxalase II family. Zn(2+) is required as a cofactor.

In terms of biological role, hydrolase acting on ester bonds. This is Hydroxyacylglutathione hydrolase-like protein (HAGHL) from Bos taurus (Bovine).